Reading from the N-terminus, the 313-residue chain is tRNA dimethylallyltransferase (313 aa).

10 to 17 contacts ATP; the sequence is GPTASGKT. 12 to 17 contacts substrate; the sequence is TASGKT. Interaction with substrate tRNA regions lie at residues 35–38, 159–163, and 240–245; these read DSAM, QRIQR, and RCVGYR.

The protein belongs to the IPP transferase family. As to quaternary structure, monomer. Mg(2+) is required as a cofactor.

It catalyses the reaction adenosine(37) in tRNA + dimethylallyl diphosphate = N(6)-dimethylallyladenosine(37) in tRNA + diphosphate. In terms of biological role, catalyzes the transfer of a dimethylallyl group onto the adenine at position 37 in tRNAs that read codons beginning with uridine, leading to the formation of N6-(dimethylallyl)adenosine (i(6)A). This chain is tRNA dimethylallyltransferase, found in Legionella pneumophila (strain Corby).